A 413-amino-acid chain; its full sequence is Histidinol-phosphate aminotransferase, chloroplastic (413 aa).

A chloroplast-targeting transit peptide spans 1–35; the sequence is MGVIELCNTSSICIGRAKPSCCSIERNQRRRIICM. Lys-273 carries the N6-(pyridoxal phosphate)lysine modification.

It belongs to the class-II pyridoxal-phosphate-dependent aminotransferase family. Histidinol-phosphate aminotransferase subfamily. In terms of assembly, homodimer. Pyridoxal 5'-phosphate is required as a cofactor. As to expression, mainly expressed in green tissues.

The protein resides in the plastid. Its subcellular location is the chloroplast. The catalysed reaction is L-histidinol phosphate + 2-oxoglutarate = 3-(imidazol-4-yl)-2-oxopropyl phosphate + L-glutamate. It functions in the pathway amino-acid biosynthesis; L-histidine biosynthesis; L-histidine from 5-phospho-alpha-D-ribose 1-diphosphate: step 7/9. The protein is Histidinol-phosphate aminotransferase, chloroplastic (HPA) of Nicotiana tabacum (Common tobacco).